An 815-amino-acid chain; its full sequence is Glycogen phosphorylase (815 aa).

At Lys662 the chain carries N6-(pyridoxal phosphate)lysine.

The protein belongs to the glycogen phosphorylase family. Requires pyridoxal 5'-phosphate as cofactor.

The catalysed reaction is [(1-&gt;4)-alpha-D-glucosyl](n) + phosphate = [(1-&gt;4)-alpha-D-glucosyl](n-1) + alpha-D-glucose 1-phosphate. In terms of biological role, phosphorylase is an important allosteric enzyme in carbohydrate metabolism. Enzymes from different sources differ in their regulatory mechanisms and in their natural substrates. However, all known phosphorylases share catalytic and structural properties. The sequence is that of Glycogen phosphorylase (glgP) from Shigella flexneri.